A 169-amino-acid chain; its full sequence is Disulfide bond formation protein B (169 aa).

At methionine 1 to leucine 14 the chain is on the cytoplasmic side. A helical membrane pass occupies residues leucine 15–tyrosine 31. The Periplasmic portion of the chain corresponds to leucine 32–tyrosine 49. The cysteines at positions 41 and 44 are disulfide-linked. The helical transmembrane segment at phenylalanine 50–methionine 64 threads the bilayer. At alanine 65–alanine 71 the chain is on the cytoplasmic side. The helical transmembrane segment at valine 72–alanine 89 threads the bilayer. The Periplasmic segment spans residues arginine 90 to glycine 144. An intrachain disulfide couples cysteine 102 to cysteine 130. Residues tryptophan 145–arginine 163 traverse the membrane as a helical segment. At histidine 164–arginine 169 the chain is on the cytoplasmic side.

This sequence belongs to the DsbB family.

It localises to the cell inner membrane. In terms of biological role, required for disulfide bond formation in some periplasmic proteins. Acts by oxidizing the DsbA protein. The sequence is that of Disulfide bond formation protein B from Burkholderia thailandensis (strain ATCC 700388 / DSM 13276 / CCUG 48851 / CIP 106301 / E264).